The following is a 537-amino-acid chain: Glucans biosynthesis protein D 2 (537 aa).

The segment at residues 1–28 (MVTRRHLLASASLSATLAALGITPEALA) is a signal peptide (tat-type signal).

This sequence belongs to the OpgD/OpgG family. Predicted to be exported by the Tat system. The position of the signal peptide cleavage has not been experimentally proven.

It localises to the periplasm. Its pathway is glycan metabolism; osmoregulated periplasmic glucan (OPG) biosynthesis. Functionally, probably involved in the control of the structural glucose backbone of osmoregulated periplasmic glucans (OPGs). The polypeptide is Glucans biosynthesis protein D 2 (opgD2) (Ralstonia nicotianae (strain ATCC BAA-1114 / GMI1000) (Ralstonia solanacearum)).